Consider the following 247-residue polypeptide: Protein ATC1/LIC4 (247 aa).

Disordered stretches follow at residues 95-146 (NSSA…DDQA) and 226-247 (EKST…CPSS). Positions 129–146 (QNPSHRISNVQSNSDDQA) are enriched in polar residues.

The protein localises to the cytoplasm. The protein resides in the nucleus. Involved in cation homeostasis and in the regulation of the cation stress signaling cascades. The chain is Protein ATC1/LIC4 (ATC1) from Debaryomyces hansenii (strain ATCC 36239 / CBS 767 / BCRC 21394 / JCM 1990 / NBRC 0083 / IGC 2968) (Yeast).